Here is a 344-residue protein sequence, read N- to C-terminus: Ferrochelatase (344 aa).

Fe cation-binding residues include H214 and E295.

The protein belongs to the ferrochelatase family.

Its subcellular location is the cytoplasm. The enzyme catalyses heme b + 2 H(+) = protoporphyrin IX + Fe(2+). Its pathway is porphyrin-containing compound metabolism; protoheme biosynthesis; protoheme from protoporphyrin-IX: step 1/1. Its function is as follows. Catalyzes the ferrous insertion into protoporphyrin IX. This is Ferrochelatase from Agrobacterium fabrum (strain C58 / ATCC 33970) (Agrobacterium tumefaciens (strain C58)).